Here is a 141-residue protein sequence, read N- to C-terminus: Large ribosomal subunit protein uL11 (141 aa).

Belongs to the universal ribosomal protein uL11 family. Part of the ribosomal stalk of the 50S ribosomal subunit. Interacts with L10 and the large rRNA to form the base of the stalk. L10 forms an elongated spine to which L12 dimers bind in a sequential fashion forming a multimeric L10(L12)X complex. Post-translationally, one or more lysine residues are methylated.

Its function is as follows. Forms part of the ribosomal stalk which helps the ribosome interact with GTP-bound translation factors. The polypeptide is Large ribosomal subunit protein uL11 (Campylobacter concisus (strain 13826)).